The following is a 118-amino-acid chain: uncharacterized protein (118 aa).

This is an uncharacterized protein from Saccharomyces cerevisiae (strain ATCC 204508 / S288c) (Baker's yeast).